The sequence spans 120 residues: ATP-dependent Clp protease adapter protein ClpS (120 aa).

The interval 1 to 20 is disordered; the sequence is MATKSPVNPKVPLVQEPDRD.

The protein belongs to the ClpS family. Binds to the N-terminal domain of the chaperone ClpA.

In terms of biological role, involved in the modulation of the specificity of the ClpAP-mediated ATP-dependent protein degradation. The polypeptide is ATP-dependent Clp protease adapter protein ClpS (Albidiferax ferrireducens (strain ATCC BAA-621 / DSM 15236 / T118) (Rhodoferax ferrireducens)).